The primary structure comprises 171 residues: Adenine phosphoribosyltransferase (171 aa).

This sequence belongs to the purine/pyrimidine phosphoribosyltransferase family. Homodimer.

Its subcellular location is the cytoplasm. It carries out the reaction AMP + diphosphate = 5-phospho-alpha-D-ribose 1-diphosphate + adenine. Its pathway is purine metabolism; AMP biosynthesis via salvage pathway; AMP from adenine: step 1/1. In terms of biological role, catalyzes a salvage reaction resulting in the formation of AMP, that is energically less costly than de novo synthesis. This Christiangramia forsetii (strain DSM 17595 / CGMCC 1.15422 / KT0803) (Gramella forsetii) protein is Adenine phosphoribosyltransferase.